Reading from the N-terminus, the 277-residue chain is Polyamine aminopropyltransferase (277 aa).

One can recognise a PABS domain in the interval 2-235 (ELWFTENQDE…SLWTFTMGSK (234 aa)). Glutamine 31 serves as a coordination point for S-methyl-5'-thioadenosine. Histidine 62 and aspartate 86 together coordinate spermidine. Residues glutamate 106 and 137–138 (DG) contribute to the S-methyl-5'-thioadenosine site. Catalysis depends on aspartate 155, which acts as the Proton acceptor. 155-158 (DSTD) provides a ligand contact to spermidine. S-methyl-5'-thioadenosine is bound at residue proline 162.

The protein belongs to the spermidine/spermine synthase family. In terms of assembly, homodimer or homotetramer.

It localises to the cytoplasm. The catalysed reaction is S-adenosyl 3-(methylsulfanyl)propylamine + putrescine = S-methyl-5'-thioadenosine + spermidine + H(+). It participates in amine and polyamine biosynthesis; spermidine biosynthesis; spermidine from putrescine: step 1/1. Its function is as follows. Catalyzes the irreversible transfer of a propylamine group from the amino donor S-adenosylmethioninamine (decarboxy-AdoMet) to putrescine (1,4-diaminobutane) to yield spermidine. The polypeptide is Polyamine aminopropyltransferase (Thermoanaerobacter pseudethanolicus (strain ATCC 33223 / 39E) (Clostridium thermohydrosulfuricum)).